Consider the following 183-residue polypeptide: Peptidyl-tRNA hydrolase (183 aa).

Tyr14 contributes to the tRNA binding site. His19 serves as the catalytic Proton acceptor. Residues Tyr61, Asn63, and Asn109 each contribute to the tRNA site.

It belongs to the PTH family. Monomer.

The protein resides in the cytoplasm. It catalyses the reaction an N-acyl-L-alpha-aminoacyl-tRNA + H2O = an N-acyl-L-amino acid + a tRNA + H(+). Functionally, hydrolyzes ribosome-free peptidyl-tRNAs (with 1 or more amino acids incorporated), which drop off the ribosome during protein synthesis, or as a result of ribosome stalling. Catalyzes the release of premature peptidyl moieties from peptidyl-tRNA molecules trapped in stalled 50S ribosomal subunits, and thus maintains levels of free tRNAs and 50S ribosomes. The protein is Peptidyl-tRNA hydrolase of Aliarcobacter butzleri (strain RM4018) (Arcobacter butzleri).